Consider the following 114-residue polypeptide: Cell division protein FtsB (114 aa).

Residues 1–3 (MGK) are Cytoplasmic-facing. The chain crosses the membrane as a helical span at residues 4–21 (LTLLLVVLLGWLQYSLWV). Over 22–114 (GKNGVHDYMR…ASYPSVTASH (93 aa)) the chain is Periplasmic. Positions 31–62 (RVKQDVATQQANNAKLKSRNDQLFAEIDDLNG) form a coiled coil.

It belongs to the FtsB family. In terms of assembly, part of a complex composed of FtsB, FtsL and FtsQ.

The protein resides in the cell inner membrane. Essential cell division protein. May link together the upstream cell division proteins, which are predominantly cytoplasmic, with the downstream cell division proteins, which are predominantly periplasmic. The chain is Cell division protein FtsB from Edwardsiella ictaluri (strain 93-146).